The sequence spans 169 residues: dCTP pyrophosphatase 1 (169 aa).

Residues 1-26 (MSASEEMLGGARGESTTATGPFSFSS) form a disordered region. The segment covering 14–26 (ESTTATGPFSFSS) has biased composition (polar residues). Residues His-37 and 46 to 50 (WEQFH) each bind substrate. Glu-62 and Glu-65 together coordinate Mg(2+). Residue Trp-72 participates in substrate binding. A Phosphoserine modification is found at Ser-84. Mg(2+)-binding residues include Glu-94 and Asp-97. Tyr-101 provides a ligand contact to substrate. Positions 143–169 (LPHGATSENQAMGPADPASESTGQVST) are disordered.

In terms of assembly, homotetramer. The cofactor is Mg(2+).

The protein resides in the cytoplasm. The protein localises to the cytosol. The enzyme catalyses dCTP + H2O = dCMP + diphosphate + H(+). Its function is as follows. Hydrolyzes deoxynucleoside triphosphates (dNTPs) to the corresponding nucleoside monophosphates. Has a strong preference for dCTP and its analogs including 5-iodo-dCTP and 5-methyl-dCTP for which it may even have a higher efficiency. May protect DNA or RNA against the incorporation of these genotoxic nucleotide analogs through their catabolism. The polypeptide is dCTP pyrophosphatase 1 (Bos taurus (Bovine)).